The chain runs to 364 residues: 3-isopropylmalate dehydrogenase (364 aa).

78 to 89 (GPKWGTGAVRPE) is a binding site for NAD(+). Positions 96, 106, 135, and 224 each coordinate substrate. Mg(2+) is bound by residues aspartate 224, aspartate 249, and aspartate 253. Residue 288-299 (GSAPDLPANKVN) participates in NAD(+) binding.

Belongs to the isocitrate and isopropylmalate dehydrogenases family. As to quaternary structure, homodimer. It depends on Mg(2+) as a cofactor. The cofactor is Mn(2+).

It is found in the cytoplasm. The catalysed reaction is (2R,3S)-3-isopropylmalate + NAD(+) = 4-methyl-2-oxopentanoate + CO2 + NADH. Its pathway is amino-acid biosynthesis; L-leucine biosynthesis; L-leucine from 3-methyl-2-oxobutanoate: step 3/4. In terms of biological role, catalyzes the oxidation of 3-carboxy-2-hydroxy-4-methylpentanoate (3-isopropylmalate) to 3-carboxy-4-methyl-2-oxopentanoate. The product decarboxylates to 4-methyl-2 oxopentanoate. In Wickerhamomyces anomalus (strain ATCC 8168 / CBS 5759 / DSM 6766 / JCM 3585 / IAM 12210 / NCYC 432 / NBRC 10213 / NRRL Y-366 / AJ 5027) (Yeast), this protein is 3-isopropylmalate dehydrogenase (LEU2).